The chain runs to 262 residues: Serine/arginine-rich SC35-like splicing factor SCL30A (262 aa).

Disordered regions lie at residues 1 to 38 and 115 to 262; these read MRGRSYTPSPPRGYGRRGRSPSPRGRFGGSRDSDLPTS and ENRK…SPSQ. A phosphoserine mark is found at serine 9 and serine 20. An RRM domain is found at 37 to 115; it reads TSLLVRNLRH…RELTVVFAEE (79 aa). Positions 115–140 are enriched in basic and acidic residues; the sequence is ENRKKPTEMRTRDRGGRSNRFQDRRR. Positions 150-161 are enriched in basic residues; it reads PPRRGRRSRSRS. 4 positions are modified to phosphoserine: serine 166, serine 174, serine 176, and serine 178. Over residues 180–190 the composition is skewed to basic and acidic residues; that stretch reads QDRRYEKERSY. Residues serine 191 and serine 193 each carry the phosphoserine modification. A compositionally biased stretch (basic residues) spans 209 to 226; that stretch reads VKSHSRSPRRSVSPRKNR. Residues 234-246 show a composition bias toward low complexity; that stretch reads RSQSPVPRQSRSP. Phosphoserine is present on residues serine 235, serine 259, and serine 261.

It belongs to the splicing factor SR family. SCL subfamily. In terms of assembly, component of the spliceosome. Interacts with SNRNP35, CYP59 and RS2Z33.

The protein localises to the nucleus speckle. In terms of biological role, involved in intron recognition and spliceosome assembly. Binds probably to multiple 5'-GAAG-3' repeats found in its third intron, suggesting autoregulation of alternative splicing. May be necessary for accurate splicing of the 3' region of introns. In Arabidopsis thaliana (Mouse-ear cress), this protein is Serine/arginine-rich SC35-like splicing factor SCL30A (SCL30A).